The following is an 81-amino-acid chain: ATP synthase subunit c (81 aa).

Transmembrane regions (helical) follow at residues 7 to 27 (FVAL…CIGI) and 53 to 73 (FLLA…AMMF).

Belongs to the ATPase C chain family. As to quaternary structure, F-type ATPases have 2 components, F(1) - the catalytic core - and F(0) - the membrane proton channel. F(1) has five subunits: alpha(3), beta(3), gamma(1), delta(1), epsilon(1). F(0) has three main subunits: a(1), b(2) and c(10-14). The alpha and beta chains form an alternating ring which encloses part of the gamma chain. F(1) is attached to F(0) by a central stalk formed by the gamma and epsilon chains, while a peripheral stalk is formed by the delta and b chains.

It is found in the cell inner membrane. F(1)F(0) ATP synthase produces ATP from ADP in the presence of a proton or sodium gradient. F-type ATPases consist of two structural domains, F(1) containing the extramembraneous catalytic core and F(0) containing the membrane proton channel, linked together by a central stalk and a peripheral stalk. During catalysis, ATP synthesis in the catalytic domain of F(1) is coupled via a rotary mechanism of the central stalk subunits to proton translocation. In terms of biological role, key component of the F(0) channel; it plays a direct role in translocation across the membrane. A homomeric c-ring of between 10-14 subunits forms the central stalk rotor element with the F(1) delta and epsilon subunits. This chain is ATP synthase subunit c, found in Azoarcus sp. (strain BH72).